We begin with the raw amino-acid sequence, 584 residues long: Probable terpene synthase 9 (584 aa).

Residues Asp339, Asp343, and Glu491 each coordinate Mg(2+). The short motif at Asp339–Asp343 is the DDXXD motif element.

It belongs to the terpene synthase family. Requires Mg(2+) as cofactor.

In terms of biological role, probable sesquiterpene synthase. In Ricinus communis (Castor bean), this protein is Probable terpene synthase 9 (TPS9).